Consider the following 374-residue polypeptide: Glutamate 5-kinase (374 aa).

K9 is a binding site for ATP. 3 residues coordinate substrate: S49, D136, and N148. Residues 168 to 169 (TD) and 210 to 216 (TGGMRSK) each bind ATP. Residues 276–354 (SGTITVDSGA…EEARQYSYLH (79 aa)) enclose the PUA domain.

The protein belongs to the glutamate 5-kinase family.

Its subcellular location is the cytoplasm. It catalyses the reaction L-glutamate + ATP = L-glutamyl 5-phosphate + ADP. The protein operates within amino-acid biosynthesis; L-proline biosynthesis; L-glutamate 5-semialdehyde from L-glutamate: step 1/2. Functionally, catalyzes the transfer of a phosphate group to glutamate to form L-glutamate 5-phosphate. This Geobacillus thermodenitrificans (strain NG80-2) protein is Glutamate 5-kinase.